The following is an 81-amino-acid chain: Putative defensin-like protein 102 (81 aa).

The first 24 residues, 1 to 24 (MTTTMKTFVAFVLTVFFIMSSAHC), serve as a signal peptide directing secretion. Cystine bridges form between C43–C78, C49–C71, C57–C76, and C61–C77.

It belongs to the DEFL family.

It localises to the secreted. The polypeptide is Putative defensin-like protein 102 (Arabidopsis thaliana (Mouse-ear cress)).